Reading from the N-terminus, the 652-residue chain is DNA ligase (652 aa).

Residues 29-33, 78-79, and glutamate 107 contribute to the NAD(+) site; these read DSEYD and SL. Lysine 109 functions as the N6-AMP-lysine intermediate in the catalytic mechanism. Arginine 130, glutamate 164, lysine 278, and lysine 302 together coordinate NAD(+). Residues cysteine 395, cysteine 398, cysteine 413, and cysteine 418 each coordinate Zn(2+). Residues 577–652 enclose the BRCT domain; that stretch reads AADAALSGMT…IRDEDWLDSL (76 aa).

The protein belongs to the NAD-dependent DNA ligase family. LigA subfamily. The cofactor is Mg(2+). Mn(2+) serves as cofactor.

The enzyme catalyses NAD(+) + (deoxyribonucleotide)n-3'-hydroxyl + 5'-phospho-(deoxyribonucleotide)m = (deoxyribonucleotide)n+m + AMP + beta-nicotinamide D-nucleotide.. In terms of biological role, DNA ligase that catalyzes the formation of phosphodiester linkages between 5'-phosphoryl and 3'-hydroxyl groups in double-stranded DNA using NAD as a coenzyme and as the energy source for the reaction. It is essential for DNA replication and repair of damaged DNA. This is DNA ligase from Streptococcus sanguinis (strain SK36).